The primary structure comprises 617 residues: mRNA export factor MEX67 (617 aa).

Gly residues predominate over residues 1 to 10 (MSYRGRGGGY). Positions 1–24 (MSYRGRGGGYNNNRGQFSSGPHQH) are disordered. LRR repeat units follow at residues 185-206 (DVDS…TSMA), 211-232 (KLQN…ETWR), and 237-258 (FLRE…AEIQ). The NTF2 domain occupies 309–499 (LATNFIANYL…MIVASDTLLI (191 aa)). Disordered stretches follow at residues 442-469 (EVDG…HKRI) and 513-554 (LPSN…TTAD). Composition is skewed to low complexity over residues 445 to 459 (GSAS…GGSR) and 526 to 542 (ATST…TTPQ). Residues 565 to 617 (QIQQELLVKILLETKLNINYGIMLCEQSNWDYQQASVNFKNSAASLPSDAFVQ) enclose the TAP-C domain.

This sequence belongs to the NXF family. In terms of assembly, interacts with nucleoporin complex protein MTR2.

The protein localises to the nucleus. It is found in the cytoplasm. Involved in the export of mRNA from the nucleus to the cytoplasm. The sequence is that of mRNA export factor MEX67 from Candida albicans (strain SC5314 / ATCC MYA-2876) (Yeast).